The following is a 509-amino-acid chain: Putative thymidine phosphorylase (509 aa).

The protein belongs to the thymidine/pyrimidine-nucleoside phosphorylase family. Type 2 subfamily.

The enzyme catalyses thymidine + phosphate = 2-deoxy-alpha-D-ribose 1-phosphate + thymine. The sequence is that of Putative thymidine phosphorylase from Chelativorans sp. (strain BNC1).